We begin with the raw amino-acid sequence, 152 residues long: Transcriptional regulator MraZ (152 aa).

2 consecutive SpoVT-AbrB domains span residues Ala5–Glu52 and Ala81–Glu124.

It belongs to the MraZ family. As to quaternary structure, forms oligomers.

It is found in the cytoplasm. It localises to the nucleoid. This is Transcriptional regulator MraZ from Mannheimia succiniciproducens (strain KCTC 0769BP / MBEL55E).